The sequence spans 539 residues: Gamma-2-syntrophin (539 aa).

One can recognise a PDZ domain in the interval 73–156; that stretch reads TVTLRRQPVG…EVTITVEYLR (84 aa). 2 stretches are compositionally biased toward low complexity: residues 168–183 and 194–205; these read SPGPSSDHSSGASSPL and SSTTAPSSPSSP. The interval 168-209 is disordered; it reads SPGPSSDHSSGASSPLFDSGLHLNGNSSTTAPSSPSSPIAKD. Positions 296-421 constitute a PH domain; it reads QVVHMGWVNE…WEKSFQRATF (126 aa).

This sequence belongs to the syntrophin family. In terms of assembly, interacts with the dystrophin protein DMD and related proteins DTNA and DTNB. Widely expressed. Strong expression in brain and testis. In CNS, it is expressed in the perikaryon and proximal portion of the neuronal processes. Strong expression in the hippocampus, neuron-rich dendate granule cells, and pyramidal cell layers. Highly expressed in neurons of the cerebral cortex. Also expressed in the cerebellar cortex, deep cerebellar nuclei, thalamus, and basal ganglia.

The protein localises to the cell membrane. It is found in the sarcolemma. The protein resides in the cytoplasm. Its subcellular location is the cytoskeleton. Adapter protein that binds to and probably organizes the subcellular localization of a variety of proteins. May link various receptors to the actin cytoskeleton and the dystrophin glycoprotein complex. The chain is Gamma-2-syntrophin (SNTG2) from Homo sapiens (Human).